The primary structure comprises 389 residues: Alcohol dehydrogenase-like 5 (389 aa).

Positions 54, 56, 77, 107, 110, 113, 121, and 186 each coordinate Zn(2+). An alcohol-binding residues include Thr56 and His77. Thr56 contributes to the NAD(+) binding site. Residues 211-216 (GLGAVG), Asp235, Lys240, 305-307 (LGI), Phe332, and Arg382 each bind NAD(+).

Belongs to the zinc-containing alcohol dehydrogenase family. Class-III subfamily. As to quaternary structure, homodimer. Requires Zn(2+) as cofactor.

The protein resides in the cytoplasm. It carries out the reaction a primary alcohol + NAD(+) = an aldehyde + NADH + H(+). The enzyme catalyses a secondary alcohol + NAD(+) = a ketone + NADH + H(+). In Arabidopsis thaliana (Mouse-ear cress), this protein is Alcohol dehydrogenase-like 5.